Consider the following 275-residue polypeptide: Dermonecrotic toxin LamSicTox-alphaIV1iii (275 aa).

His5 is an active-site residue. Glu25 and Asp27 together coordinate Mg(2+). His41 (nucleophile) is an active-site residue. Intrachain disulfides connect Cys45–Cys51 and Cys47–Cys192. Residue Asp85 coordinates Mg(2+).

It belongs to the arthropod phospholipase D family. Class II subfamily. Mg(2+) is required as a cofactor. In terms of tissue distribution, expressed by the venom gland.

The protein localises to the secreted. It catalyses the reaction an N-(acyl)-sphingosylphosphocholine = an N-(acyl)-sphingosyl-1,3-cyclic phosphate + choline. It carries out the reaction an N-(acyl)-sphingosylphosphoethanolamine = an N-(acyl)-sphingosyl-1,3-cyclic phosphate + ethanolamine. The enzyme catalyses a 1-acyl-sn-glycero-3-phosphocholine = a 1-acyl-sn-glycero-2,3-cyclic phosphate + choline. The catalysed reaction is a 1-acyl-sn-glycero-3-phosphoethanolamine = a 1-acyl-sn-glycero-2,3-cyclic phosphate + ethanolamine. In terms of biological role, dermonecrotic toxins cleave the phosphodiester linkage between the phosphate and headgroup of certain phospholipids (sphingolipid and lysolipid substrates), forming an alcohol (often choline) and a cyclic phosphate. This toxin acts on sphingomyelin (SM). It may also act on ceramide phosphoethanolamine (CPE), lysophosphatidylcholine (LPC) and lysophosphatidylethanolamine (LPE), but not on lysophosphatidylserine (LPS), and lysophosphatidylglycerol (LPG). It acts by transphosphatidylation, releasing exclusively cyclic phosphate products as second products. Induces dermonecrosis, hemolysis, increased vascular permeability, edema, inflammatory response, and platelet aggregation. This chain is Dermonecrotic toxin LamSicTox-alphaIV1iii, found in Loxosceles amazonica (Recluse spider).